The following is a 202-amino-acid chain: Type II restriction enzyme MunI (202 aa).

Homodimer.

The catalysed reaction is Endonucleolytic cleavage of DNA to give specific double-stranded fragments with terminal 5'-phosphates.. In terms of biological role, a P subtype restriction enzyme that recognizes the double-stranded sequence 5'-CAATTG-3' and cleaves after C-1. This chain is Type II restriction enzyme MunI, found in Mycoplasma sp.